Here is a 460-residue protein sequence, read N- to C-terminus: C4-dicarboxylate transport protein (460 aa).

Helical transmembrane passes span 21–38, 53–75, 88–110, 153–175, 196–218, 231–253, 301–323, and 363–385; these read LYFQVIVAIVIGILIGHF, FIKLIKMVIAPIIFCTVVSGIAG, YALLYFEIVSTIALLIGLIVVNV, IVGAFANGDILQVLMFSVIFGFA, VMFNIINMIMKLAPIGAFGAMAF, LGQLMICFYITCVLFVVLVLGSI, VVGLVIPTGYSFNLDGTSIYLTM, and FIVLAATLSAVGHLPVAGLALIL. The tract at residues 438–460 is disordered; the sequence is PEDDLGVAEGPTPANAVNTTKTV.

Belongs to the dicarboxylate/amino acid:cation symporter (DAACS) (TC 2.A.23) family.

The protein resides in the cell inner membrane. Its function is as follows. Responsible for the transport of dicarboxylates such as succinate, fumarate, and malate from the periplasm across the membrane. This is C4-dicarboxylate transport protein from Pseudomonas syringae pv. tomato (strain ATCC BAA-871 / DC3000).